Consider the following 339-residue polypeptide: Putative P2Y purinoceptor 10 (339 aa).

At 1 to 39 (MANLDKYTETFKMGSNSTSTAEIYCNVTNVKFQYSLYAT) the chain is on the extracellular side. N-linked (GlcNAc...) asparagine glycosylation is found at N16 and N26. The helical transmembrane segment at 40–60 (TYILIFIPGLLANSAALWVLC) threads the bilayer. The Cytoplasmic portion of the chain corresponds to 61 to 68 (RFISKKNK). Residues 69–89 (AIIFMINLSVADLAHVLSLPL) form a helical membrane-spanning segment. Residues 90–103 (RIYYYISHHWPFQR) lie on the Extracellular side of the membrane. The helical transmembrane segment at 104–124 (ALCLLCFYLKYLNMYASICFL) threads the bilayer. C106 and C181 form a disulfide bridge. Residues 125 to 149 (TCISLQRCFFLLKPFRARDWKRRYD) are Cytoplasmic-facing. Residues 150-170 (VGISAAIWIVVGTACLPFPIL) traverse the membrane as a helical segment. The Extracellular portion of the chain corresponds to 171–193 (RSTDLNNNKSCFADLGYKQMNAV). N-linked (GlcNAc...) asparagine glycosylation occurs at N178. The helical transmembrane segment at 194 to 214 (ALVGMITVAELAGFVIPVIII) threads the bilayer. At 215–244 (AWCTWKTTISLRQPPMAFQGISERQKALRM) the chain is on the cytoplasmic side. Residues 245-265 (VFMCAAVFFICFTPYHINFIF) traverse the membrane as a helical segment. The Extracellular portion of the chain corresponds to 266-288 (YTMVKETIISSCPVVRIALYFHP). A helical transmembrane segment spans residues 289 to 309 (FCLCLASLCCLLDPILYYFMA). Residues 310–339 (SEFRDQLSRHGSSVTRSRLMSKESGSSMIG) are Cytoplasmic-facing.

Belongs to the G-protein coupled receptor 1 family. In terms of tissue distribution, weakly expressed in blood leukocytes.

It localises to the cell membrane. Functionally, putative receptor for purines coupled to G-proteins. This chain is Putative P2Y purinoceptor 10 (P2RY10), found in Homo sapiens (Human).